Consider the following 318-residue polypeptide: HPr kinase/phosphorylase (318 aa).

Active-site residues include His-146 and Lys-167. Gly-161–Ser-168 is an ATP binding site. Ser-168 serves as a coordination point for Mg(2+). Catalysis depends on Asp-185, which acts as the Proton acceptor; for phosphorylation activity. Proton donor; for dephosphorylation activity. Positions Leu-209–Asp-218 are important for the catalytic mechanism of both phosphorylation and dephosphorylation. Glu-210 serves as a coordination point for Mg(2+). Arg-252 is a catalytic residue. Residues Gln-273–Arg-278 form an important for the catalytic mechanism of dephosphorylation region.

Belongs to the HPrK/P family. Homohexamer. Requires Mg(2+) as cofactor.

The catalysed reaction is [HPr protein]-L-serine + ATP = [HPr protein]-O-phospho-L-serine + ADP + H(+). The enzyme catalyses [HPr protein]-O-phospho-L-serine + phosphate + H(+) = [HPr protein]-L-serine + diphosphate. Its function is as follows. Catalyzes the ATP- as well as the pyrophosphate-dependent phosphorylation of a specific serine residue in HPr, a phosphocarrier protein of the phosphoenolpyruvate-dependent sugar phosphotransferase system (PTS). HprK/P also catalyzes the pyrophosphate-producing, inorganic phosphate-dependent dephosphorylation (phosphorolysis) of seryl-phosphorylated HPr (P-Ser-HPr). The protein is HPr kinase/phosphorylase of Acidovorax sp. (strain JS42).